The sequence spans 375 residues: Queuine tRNA-ribosyltransferase (375 aa).

Asp-93 (proton acceptor) is an active-site residue. Substrate-binding positions include 93–97, Asp-147, Gln-191, and Gly-218; that span reads DSGGF. Residues 249–255 are RNA binding; that stretch reads GVGTPLD. Catalysis depends on Asp-268, which acts as the Nucleophile. The tract at residues 273–277 is RNA binding; important for wobble base 34 recognition; that stretch reads TRNAR. Residues Cys-306, Cys-308, Cys-311, and His-337 each contribute to the Zn(2+) site.

This sequence belongs to the queuine tRNA-ribosyltransferase family. Homodimer. Within each dimer, one monomer is responsible for RNA recognition and catalysis, while the other monomer binds to the replacement base PreQ1. Zn(2+) is required as a cofactor.

The enzyme catalyses 7-aminomethyl-7-carbaguanine + guanosine(34) in tRNA = 7-aminomethyl-7-carbaguanosine(34) in tRNA + guanine. It participates in tRNA modification; tRNA-queuosine biosynthesis. Catalyzes the base-exchange of a guanine (G) residue with the queuine precursor 7-aminomethyl-7-deazaguanine (PreQ1) at position 34 (anticodon wobble position) in tRNAs with GU(N) anticodons (tRNA-Asp, -Asn, -His and -Tyr). Catalysis occurs through a double-displacement mechanism. The nucleophile active site attacks the C1' of nucleotide 34 to detach the guanine base from the RNA, forming a covalent enzyme-RNA intermediate. The proton acceptor active site deprotonates the incoming PreQ1, allowing a nucleophilic attack on the C1' of the ribose to form the product. After dissociation, two additional enzymatic reactions on the tRNA convert PreQ1 to queuine (Q), resulting in the hypermodified nucleoside queuosine (7-(((4,5-cis-dihydroxy-2-cyclopenten-1-yl)amino)methyl)-7-deazaguanosine). This chain is Queuine tRNA-ribosyltransferase, found in Nitratidesulfovibrio vulgaris (strain DP4) (Desulfovibrio vulgaris).